A 581-amino-acid polypeptide reads, in one-letter code: Proline--tRNA ligase (581 aa).

The protein belongs to the class-II aminoacyl-tRNA synthetase family. ProS type 1 subfamily. In terms of assembly, homodimer.

Its subcellular location is the cytoplasm. The enzyme catalyses tRNA(Pro) + L-proline + ATP = L-prolyl-tRNA(Pro) + AMP + diphosphate. Functionally, catalyzes the attachment of proline to tRNA(Pro) in a two-step reaction: proline is first activated by ATP to form Pro-AMP and then transferred to the acceptor end of tRNA(Pro). As ProRS can inadvertently accommodate and process non-cognate amino acids such as alanine and cysteine, to avoid such errors it has two additional distinct editing activities against alanine. One activity is designated as 'pretransfer' editing and involves the tRNA(Pro)-independent hydrolysis of activated Ala-AMP. The other activity is designated 'posttransfer' editing and involves deacylation of mischarged Ala-tRNA(Pro). The misacylated Cys-tRNA(Pro) is not edited by ProRS. This is Proline--tRNA ligase from Chlamydia trachomatis serovar D (strain ATCC VR-885 / DSM 19411 / UW-3/Cx).